The primary structure comprises 146 residues: Large ribosomal subunit protein uL15 (146 aa).

Over residues 1–13 the composition is skewed to basic and acidic residues; the sequence is MKLHELQPAEGSR. The tract at residues 1–58 is disordered; that stretch reads MKLHELQPAEGSRKVRNRVGRGIGSGNGKTAGKGHKGQKARSGGGVRPGFEGGQNPLY. Composition is skewed to gly residues over residues 21 to 31 and 42 to 52; these read RGIGSGNGKTA and SGGGVRPGFEG.

The protein belongs to the universal ribosomal protein uL15 family. Part of the 50S ribosomal subunit.

Its function is as follows. Binds to the 23S rRNA. In Shouchella clausii (strain KSM-K16) (Alkalihalobacillus clausii), this protein is Large ribosomal subunit protein uL15.